A 505-amino-acid chain; its full sequence is Phosphoglycerate kinase A (505 aa).

Residues Val32, Asp33, Phe34, Asn35, Arg48, Ser70, His71, Gly73, Arg74, Arg224, His260, and Arg261 each contribute to the (2R)-3-phosphoglycerate site. 2 residues coordinate ADP: Gly306 and Ala307. Gly306 is a binding site for CDP. Ala307 and Lys308 together coordinate AMP. Ala307 provides a ligand contact to ATP. A Mg(2+)-binding site is contributed by Ala307. (2R)-3-phosphoglycerate is bound at residue Lys308. Position 311 (Glu311) interacts with CDP. Mg(2+) is bound at residue Glu311. ADP is bound by residues Lys312 and Gly330. Lys312 lines the AMP pocket. Residue Lys312 coordinates ATP. Gly330 is a CDP binding site. AMP contacts are provided by Ala331 and Ala403. ATP contacts are provided by Ala331 and Ala403. 2 residues coordinate ADP: Ala403 and Asn427. CDP-binding residues include Gly428 and Phe433. Residues Phe433, Glu434, Glu466, and Ser467 each coordinate ADP. Glu434 serves as a coordination point for AMP. Glu434, Glu466, and Ser467 together coordinate ATP. Glu466 provides a ligand contact to Mg(2+).

It belongs to the phosphoglycerate kinase family. Monomer. Mg(2+) serves as cofactor.

It carries out the reaction (2R)-3-phosphoglycerate + ATP = (2R)-3-phospho-glyceroyl phosphate + ADP. It functions in the pathway carbohydrate degradation; glycolysis; pyruvate from D-glyceraldehyde 3-phosphate: step 2/5. This Trypanosoma brucei brucei protein is Phosphoglycerate kinase A.